The sequence spans 271 residues: Formamidopyrimidine-DNA glycosylase (271 aa).

The active-site Schiff-base intermediate with DNA is proline 2. The Proton donor role is filled by glutamate 3. The active-site Proton donor; for beta-elimination activity is the lysine 58. Histidine 92, arginine 111, and lysine 152 together coordinate DNA. Residues 237-271 (YVYGKVQKPCKICNNIITLIRQNGRSTYFCNACQN) form an FPG-type zinc finger. Arginine 261 (proton donor; for delta-elimination activity) is an active-site residue.

This sequence belongs to the FPG family. In terms of assembly, monomer. Requires Zn(2+) as cofactor.

The catalysed reaction is Hydrolysis of DNA containing ring-opened 7-methylguanine residues, releasing 2,6-diamino-4-hydroxy-5-(N-methyl)formamidopyrimidine.. It carries out the reaction 2'-deoxyribonucleotide-(2'-deoxyribose 5'-phosphate)-2'-deoxyribonucleotide-DNA = a 3'-end 2'-deoxyribonucleotide-(2,3-dehydro-2,3-deoxyribose 5'-phosphate)-DNA + a 5'-end 5'-phospho-2'-deoxyribonucleoside-DNA + H(+). In terms of biological role, involved in base excision repair of DNA damaged by oxidation or by mutagenic agents. Acts as a DNA glycosylase that recognizes and removes damaged bases. Has a preference for oxidized purines, such as 7,8-dihydro-8-oxoguanine (8-oxoG). Has AP (apurinic/apyrimidinic) lyase activity and introduces nicks in the DNA strand. Cleaves the DNA backbone by beta-delta elimination to generate a single-strand break at the site of the removed base with both 3'- and 5'-phosphates. The chain is Formamidopyrimidine-DNA glycosylase from Wolbachia pipientis wMel.